We begin with the raw amino-acid sequence, 69 residues long: uncharacterized protein (69 aa).

This is an uncharacterized protein from Acheta domesticus (House cricket).